The following is a 258-amino-acid chain: Enoyl-[acyl-carrier-protein] reductase [NADH] FabI (258 aa).

NAD(+) contacts are provided by residues Gly14, 20–21 (SI), 67–68 (DV), and Ile95. Residue Ala98 participates in substrate binding. Active-site proton acceptor residues include Tyr148 and Tyr158. Residues Lys165 and 194 to 198 (IRTLS) contribute to the NAD(+) site.

The protein belongs to the short-chain dehydrogenases/reductases (SDR) family. FabI subfamily. In terms of assembly, homotetramer.

It carries out the reaction a 2,3-saturated acyl-[ACP] + NAD(+) = a (2E)-enoyl-[ACP] + NADH + H(+). The catalysed reaction is (2E)-butenoyl-[ACP] + NADH + H(+) = butanoyl-[ACP] + NAD(+). It functions in the pathway lipid metabolism; fatty acid biosynthesis. Inhibited by triclosan and acrylamide. Catalyzes the reduction of a carbon-carbon double bond in an enoyl moiety that is covalently linked to an acyl carrier protein (ACP). Involved in the elongation cycle of fatty acid which are used in the lipid metabolism. This Bacillus subtilis (strain 168) protein is Enoyl-[acyl-carrier-protein] reductase [NADH] FabI (fabI).